Consider the following 224-residue polypeptide: MKQEKTVSPTVENNRSAESRLSQCDLDECFDESHDRDEEVLGSMTDAVYSLLKGVGEDPEREGLLLTPERVAKSLRFLTKGYRQDPEQLLKKAVFTESYDEMVLVKDIDIYSMCEHHMLPFFGKAHVAYIPDGKIVGLSKIPRVVEVFARRLQVQERLTQQIRDAIQNVLNPRGVAVVIEATHMCMVMRGVEKQNAVTTTSAMSGDFMTSQSTRSEFLRLIGNH.

Residues 1–20 (MKQEKTVSPTVENNRSAESR) are disordered. Zn(2+) is bound by residues C114, H117, and C185.

This sequence belongs to the GTP cyclohydrolase I family. As to quaternary structure, toroid-shaped homodecamer, composed of two pentamers of five dimers.

It carries out the reaction GTP + H2O = 7,8-dihydroneopterin 3'-triphosphate + formate + H(+). It functions in the pathway cofactor biosynthesis; 7,8-dihydroneopterin triphosphate biosynthesis; 7,8-dihydroneopterin triphosphate from GTP: step 1/1. The chain is GTP cyclohydrolase 1 from Chlorobaculum tepidum (strain ATCC 49652 / DSM 12025 / NBRC 103806 / TLS) (Chlorobium tepidum).